A 162-amino-acid chain; its full sequence is Allophycocyanin alpha-B chain (162 aa).

The residue at position 71 (Asn-71) is an N4-methylasparagine. Residue Cys-81 coordinates (2R,3E)-phycocyanobilin.

The protein belongs to the phycobiliprotein family. In terms of processing, contains one covalently linked phycocyanobilin chromophore.

It localises to the plastid. The protein resides in the cyanelle thylakoid membrane. In terms of biological role, allophycocyanin is a photosynthetic bile pigment-protein complex with maximum absorption at approximately 650 nanometers. In Cyanophora paradoxa, this protein is Allophycocyanin alpha-B chain (apcD).